Reading from the N-terminus, the 290-residue chain is MLFNLTVLVMKTFKFHYKFILLFSNKFRFYLYYYMKTRSNSVLIPYTLNFKQVEAEMSLAEHLEEIRQRAFWSFSVLTTMIISCIIFVKNIVKTLQEPAAGIKFLQFAPGEYFFASIKVAAYSGILISSPFIVYQILLFVLPGMTKDERKTLLPIIIGSMILFLLGLIFGYYILVPASLNFFIKYGSDVVEPFWSFEQYFEFILVLLFGTALAFQLPVLQLVLGFLRIVSGKTMFSIWRYVILLSTVVGAVLTPSVDPLTQILLSSIILILYFGGASLVLVVEGSQKNNN.

6 consecutive transmembrane segments (helical) span residues 71–91 (FWSF…VKNI), 124–144 (GILI…LPGM), 155–175 (IIIG…YILV), 202–222 (FILV…LQLV), 234–254 (MFSI…VLTP), and 262–282 (ILLS…VLVV).

This sequence belongs to the TatC family.

It localises to the plastid. Its subcellular location is the chloroplast membrane. This is an uncharacterized protein from Guillardia theta (Cryptophyte).